A 415-amino-acid polypeptide reads, in one-letter code: Esterase FrsA (415 aa).

Belongs to the FrsA family. In terms of assembly, monomer in solution. Homodimer. Forms a 1:1 complex with the unphosphorylated form of the EIIA component of the glucose-specific PTS system (IIAGlc).

It carries out the reaction a carboxylic ester + H2O = an alcohol + a carboxylate + H(+). Its function is as follows. Catalyzes the hydrolysis of esters. In vitro, prefers short chain alkanoate ester as substrate. Displays highest activity towards p-nitrophenyl acetate (pNPA). Has weaker activity towards p-nitrophenyl butyrate (pNPB). The sequence is that of Esterase FrsA from Vibrio vulnificus (strain CMCP6).